We begin with the raw amino-acid sequence, 1320 residues long: Inner centromere protein A (1320 aa).

Disordered stretches follow at residues 53 to 75 (KNSN…NNIS), 426 to 447 (QEKQ…QPVV), 611 to 679 (NEPI…VVPP), 701 to 877 (EEEE…NTAS), and 896 to 1215 (TKSP…DGDE). Low complexity-rich tracts occupy residues 54-75 (NSNY…NNIS), 429-447 (QQQQ…QPVV), and 615-640 (QQPS…SSSS). The stretch at 221–444 (QQNQFQEQHK…KQQEKQQQQQ (224 aa)) forms a coiled coil. Residues 653–668 (TIVTSKPTNKVQPQSL) show a composition bias toward polar residues. Residues 669-679 (NSNINNNVVPP) are compositionally biased toward low complexity. The stretch at 683–855 (AAIANKLKKQ…QKKKTVQTIL (173 aa)) forms a coiled coil. The span at 701–835 (EEEERLRKKQ…QEKEKQEKQK (135 aa)) shows a compositional bias: basic and acidic residues. A compositionally biased stretch (polar residues) spans 851–863 (VQTILPTPQTPSR). A compositionally biased stretch (low complexity) spans 864-877 (SANNNYDDAANTAS). Composition is skewed to acidic residues over residues 908–926 (DDQD…ENSE) and 934–951 (QDDS…DSDE). Residues 965–977 (NKNKNSNNSNNNN) are compositionally biased toward low complexity. The span at 981–1000 (QSRKDKSIVFDSDSLNRNHN) shows a compositional bias: basic and acidic residues. 2 stretches are compositionally biased toward low complexity: residues 1026-1040 (SNMK…YSNS) and 1047-1061 (SPPS…SSES). Residues 1062–1071 (NDCFSPLTPT) are compositionally biased toward polar residues. A compositionally biased stretch (low complexity) spans 1072–1096 (NNNKINNNKINNNNSNNNSFNNSNS). The segment covering 1120–1136 (SKTSPFLTIRNTPSPLK) has biased composition (polar residues). Residues 1143-1154 (NMSSASSLSSFD) show a composition bias toward low complexity. Residues 1155 to 1170 (SDNDSDYNDNDIDDGE) show a composition bias toward acidic residues. The span at 1175-1187 (PNENFTTPLKNQE) shows a compositional bias: polar residues. Residues 1188–1198 (NNNNNNSNNSN) show a composition bias toward low complexity. The span at 1199-1209 (TQYPIITSPPS) shows a compositional bias: polar residues.

This sequence belongs to the INCENP family. Interacts with aurK.

The protein resides in the chromosome. It localises to the centromere. The protein localises to the cytoplasm. Its subcellular location is the cytoskeleton. It is found in the spindle. The protein resides in the nucleus. It localises to the cleavage furrow. In terms of biological role, chromosomal passenger protein that seems to be required for chromosome segregation and the onset of cytokinesis during mitosis. Plays a key role in the abscission of daughter cells at the end of cytokinesis and in the establishment or maintenance of a bipolar spindle. The protein is Inner centromere protein A (icpA) of Dictyostelium discoideum (Social amoeba).